The sequence spans 291 residues: Kidney mitochondrial carrier protein 1 (291 aa).

3 Solcar repeats span residues K7–L96, E104–H189, and D198–L289. 6 helical membrane passes run F9–I26, G71–T89, L106–A124, G164–Y183, F204–V224, and G264–Y283.

It belongs to the mitochondrial carrier (TC 2.A.29) family.

Its subcellular location is the mitochondrion inner membrane. It catalyses the reaction sulfite(in) + sulfate(out) = sulfite(out) + sulfate(in). The catalysed reaction is thiosulfate(in) + sulfate(out) = thiosulfate(out) + sulfate(in). It carries out the reaction sulfate(out) + phosphate(in) = sulfate(in) + phosphate(out). The enzyme catalyses oxalate(in) + sulfate(out) = oxalate(out) + sulfate(in). It catalyses the reaction malonate(in) + sulfate(out) = malonate(out) + sulfate(in). The catalysed reaction is maleate(in) + sulfate(out) = maleate(out) + sulfate(in). It carries out the reaction (S)-malate(in) + sulfate(out) = (S)-malate(out) + sulfate(in). The enzyme catalyses (3S)-citramalate(in) + sulfate(out) = (3S)-citramalate(out) + sulfate(in). It catalyses the reaction (3R)-citramalate(in) + sulfate(out) = (3R)-citramalate(out) + sulfate(in). The catalysed reaction is sulfate(out) + succinate(in) = sulfate(in) + succinate(out). It carries out the reaction (S,S)-tartrate(in) + sulfate(out) = (S,S)-tartrate(out) + sulfate(in). The enzyme catalyses (2R,3R)-tartrate(in) + sulfate(out) = (2R,3R)-tartrate(out) + sulfate(in). It catalyses the reaction D-aspartate(in) + sulfate(out) = D-aspartate(out) + sulfate(in). The catalysed reaction is L-aspartate(in) + sulfate(out) = L-aspartate(out) + sulfate(in). It carries out the reaction sulfate(in) = sulfate(out). The enzyme catalyses phosphate(in) = phosphate(out). It catalyses the reaction (S)-malate(out) = (S)-malate(in). Its function is as follows. Probable transporter. Functionally, antiporter that transports inorganic anions (sulfate, sulfite, thiosulfate and phosphate) and, to a lesser extent, a variety of dicarboxylates (e.g. malonate, malate and citramalate) and, even more so, aspartate. The sulfate/sulfate exchange is much higher than the phosphate/phosphate and malate/malate exchanges. The transport affinities is higher for sulfate and thiosulfate than for any other substrate. May catalyze the export of sulfite and thiosulfate (the hydrogen sulfide degradation products) from the mitochondria, thereby modulating the level of the hydrogen sulfide. Also may mediate a very low unidirectional transport of sulfate, phosphate and (S)-malate. The polypeptide is Kidney mitochondrial carrier protein 1 (Xenopus laevis (African clawed frog)).